The primary structure comprises 372 residues: Aryl-hydrocarbon-interacting protein-like 1 (372 aa).

One can recognise a PPIase FKBP-type domain in the interval 53–145 (RQVDQPMHII…DLDELQKEPQ (93 aa)). TPR repeat units lie at residues 178-211 (VPVL…LRNL), 230-263 (NTLT…HPGI), and 264-297 (VKAY…EPSM). A disordered region spans residues 315–372 (KQEEERLRCRNMLSQGATQPPTEPPAEPHTAPPAELSTGPPAEPPAELPLSPGHSLQH). Pro residues predominate over residues 335–345 (PTEPPAEPHTA).

As to quaternary structure, interacts with NUB1.

It is found in the cytoplasm. It localises to the nucleus. May be important in protein trafficking and/or protein folding and stabilization. This Papio cynocephalus (Yellow baboon) protein is Aryl-hydrocarbon-interacting protein-like 1 (AIPL1).